The sequence spans 248 residues: Leucyl/phenylalanyl-tRNA--protein transferase (248 aa).

It belongs to the L/F-transferase family.

Its subcellular location is the cytoplasm. The catalysed reaction is N-terminal L-lysyl-[protein] + L-leucyl-tRNA(Leu) = N-terminal L-leucyl-L-lysyl-[protein] + tRNA(Leu) + H(+). It catalyses the reaction N-terminal L-arginyl-[protein] + L-leucyl-tRNA(Leu) = N-terminal L-leucyl-L-arginyl-[protein] + tRNA(Leu) + H(+). The enzyme catalyses L-phenylalanyl-tRNA(Phe) + an N-terminal L-alpha-aminoacyl-[protein] = an N-terminal L-phenylalanyl-L-alpha-aminoacyl-[protein] + tRNA(Phe). Its function is as follows. Functions in the N-end rule pathway of protein degradation where it conjugates Leu, Phe and, less efficiently, Met from aminoacyl-tRNAs to the N-termini of proteins containing an N-terminal arginine or lysine. The sequence is that of Leucyl/phenylalanyl-tRNA--protein transferase from Oleidesulfovibrio alaskensis (strain ATCC BAA-1058 / DSM 17464 / G20) (Desulfovibrio alaskensis).